A 606-amino-acid polypeptide reads, in one-letter code: Granule-bound starch synthase 1, chloroplastic/amyloplastic (606 aa).

The N-terminal 76 residues, 1–76, are a transit peptide targeting the chloroplast; that stretch reads MSALTTSQLA…GSRRFPSVVV (76 aa). Positions 29–67 are disordered; the sequence is RHGFQGLKPRSPAGGDASSLSVTTSARATPKQQRSVQRG. A compositionally biased stretch (polar residues) spans 46–66; sequence SSLSVTTSARATPKQQRSVQR. ADP-alpha-D-glucose is bound at residue Lys-97.

Belongs to the glycosyltransferase 1 family. Bacterial/plant glycogen synthase subfamily.

Its subcellular location is the plastid. It is found in the chloroplast. The protein localises to the amyloplast. It catalyses the reaction an NDP-alpha-D-glucose + [(1-&gt;4)-alpha-D-glucosyl](n) = [(1-&gt;4)-alpha-D-glucosyl](n+1) + a ribonucleoside 5'-diphosphate + H(+). The protein operates within glycan biosynthesis; starch biosynthesis. Its function is as follows. Required for the synthesis of amylose in endosperm. This Oryza sativa (Rice) protein is Granule-bound starch synthase 1, chloroplastic/amyloplastic (WAXY).